Here is a 250-residue protein sequence, read N- to C-terminus: HLA class II histocompatibility antigen, DO alpha chain (250 aa).

The signal sequence occupies residues 1 to 25 (MALRAGLVLGFHTLMTLLSPQEAGA). Residues 26–110 (TKADHMGSYG…ERSNRSRAIN (85 aa)) are alpha-1. Topologically, residues 26–217 (TKADHMGSYG…VPIPPPDAME (192 aa)) are extracellular. N-linked (GlcNAc...) asparagine glycosylation is found at asparagine 104 and asparagine 144. The tract at residues 111 to 204 (VPPRVTVLPK…GLDAPLLRHW (94 aa)) is alpha-2. An Ig-like C1-type domain is found at 113-205 (PRVTVLPKSR…LDAPLLRHWE (93 aa)). A disulfide bridge connects residues cysteine 133 and cysteine 189. The connecting peptide stretch occupies residues 205 to 217 (ELQVPIPPPDAME). Residues 218–240 (TLVCALGLAIGLVGFLVGTVLII) form a helical membrane-spanning segment. The Cytoplasmic segment spans residues 241-250 (MGTYVSSVPR).

Belongs to the MHC class II family. In terms of assembly, heterodimer of an alpha chain (DOA) and a beta chain (DOB). Forms a heterotetrameric complex with an HLA-DM molecule during intracellular transport in endosomal/lysosomal compartments in B-cells.

The protein resides in the endosome membrane. It is found in the lysosome membrane. Its function is as follows. Important modulator in the HLA class II restricted antigen presentation pathway by interaction with the HLA-DM molecule in B-cells. Modifies peptide exchange activity of HLA-DM. The protein is HLA class II histocompatibility antigen, DO alpha chain (HLA-DOA) of Homo sapiens (Human).